Reading from the N-terminus, the 88-residue chain is Early E1B 9 kDa protein (88 aa).

The segment at 23-88 is disordered; the sequence is NMEGSQDEDN…DLFPELRRLP (66 aa). Over residues 34–44 the composition is skewed to low complexity; it reads RLLASAASGSS.

The chain is Early E1B 9 kDa protein from Homo sapiens (Human).